We begin with the raw amino-acid sequence, 502 residues long: N-fatty-acyl-amino acid synthase/hydrolase PM20D1 (502 aa).

The signal sequence occupies residues Met1–Ser25. Residue His125 coordinates Zn(2+). The active site involves Asp127. Residue Asp157 participates in Zn(2+) binding. The active-site Proton acceptor is the Glu191. 2 residues coordinate Zn(2+): Glu192 and Asp217. N-linked (GlcNAc...) asparagine glycosylation is present at Asn252. His464 serves as a coordination point for Zn(2+).

It belongs to the peptidase M20A family. Zn(2+) serves as cofactor.

Its subcellular location is the secreted. The enzyme catalyses an N-acyl-L-amino acid + H2O = an L-alpha-amino acid + a carboxylate. The catalysed reaction is an N-acyl-aromatic L-alpha-amino acid + H2O = an aromatic L-alpha-amino acid + a carboxylate. It catalyses the reaction L-phenylalanine + (9Z)-octadecenoate = N-(9Z-octadecenoyl)-L-phenylalanine + H2O. It carries out the reaction N-(9Z-octadecenoyl)-L-leucine + H2O = L-leucine + (9Z)-octadecenoate. The enzyme catalyses N-(5Z,8Z,11Z,14Z)-eicosatetraenoyl-glycine + H2O = (5Z,8Z,11Z,14Z)-eicosatetraenoate + glycine. The catalysed reaction is N-hexadecanoyl-L-phenylalanine + H2O = hexadecanoate + L-phenylalanine. It catalyses the reaction N-octadecanoyl-L-phenylalanine + H2O = octadecanoate + L-phenylalanine. It carries out the reaction N-(4Z,7Z,10Z,13Z,16Z,19Z-docosahexaenoyl)-L-phenylalanine + H2O = (4Z,7Z,10Z,13Z,16Z,19Z)-docosahexaenoate + L-phenylalanine. The enzyme catalyses N-(9Z-octadecenoyl)-L-asparagine + H2O = L-asparagine + (9Z)-octadecenoate. The catalysed reaction is (9Z)-octadecenoate + glycine = N-(9Z-octadecenoyl)glycine + H2O. It catalyses the reaction N-(9Z-octadecenoyl)-L-lysine + H2O = L-lysine + (9Z)-octadecenoate. It carries out the reaction N-(9Z-octadecenoyl)-L-methionine + H2O = (9Z)-octadecenoate + L-methionine. The enzyme catalyses N-(9Z-octadecenoyl)-L-serine + H2O = L-serine + (9Z)-octadecenoate. The catalysed reaction is N-(9Z-octadecenoyl)-L-tryptophan + H2O = L-tryptophan + (9Z)-octadecenoate. It catalyses the reaction N-(9Z-octadecenoyl)-L-tyrosine + H2O = L-tyrosine + (9Z)-octadecenoate. It carries out the reaction N-(9Z-octadecenoyl)-L-glutamine + H2O = L-glutamine + (9Z)-octadecenoate. The enzyme catalyses N-(5Z,8Z,11Z,14Z-eicosatetraenoyl)-L-serine + H2O = (5Z,8Z,11Z,14Z)-eicosatetraenoate + L-serine. The catalysed reaction is (5Z,8Z,11Z,14Z)-eicosatetraenoate + L-phenylalanine = N-(5Z,8Z,11Z,14Z-eicosatetraenoyl)-L-phenylalanine + H2O. It participates in amino-acid metabolism. Its pathway is energy metabolism. It functions in the pathway lipid metabolism; fatty acid metabolism. With respect to regulation, lipoproteins are powerful coactivators of PM20D1 activity in vitro and NAA biosynthesis in vivo. Secreted enzyme that regulates the endogenous N-fatty acyl amino acid (NAAs) tissue and circulating levels by functioning as a bidirectional NAA synthase/hydrolase. It condenses free fatty acids and free amino acids to generate NAAs and bidirectionally catalyzes the reverse hydrolysis reaction. Some of these NAAs stimulate oxidative metabolism via mitochondrial uncoupling, increasing energy expenditure in a UPC1-independent manner. Thereby, this secreted protein may indirectly regulate whole body energy expenditure. PM20D1 circulates in tight association with both low- and high-density (LDL and HDL,respectively) lipoprotein particles. This is N-fatty-acyl-amino acid synthase/hydrolase PM20D1 from Homo sapiens (Human).